Reading from the N-terminus, the 511-residue chain is MKLFLLLSAFGFCWAQYAPQTQSGRTSIVHLFEWRWVDIALECERYLGPKGFGGVQVSPPNENIVVTNPSRPWWERYQPVSYKLCTRSGNENEFRDMVTRCNNVGVRIYVDAVINHMCGSGAAAGTGTTCGSYCNPGNREFPAVPYSAWDFNDGKCKTASGGIESYNDPYQVRDCQLVGLLDLALEKDYVRSMIADYLNKLIDIGVAGFRIDASKHMWPGDIKAVLDKLHNLNTNWFPAGSRPFIFQEVIDLGGEAIQSSEYFGNGRVTEFKYGAKLGTVVRKWSGEKMSYLKNWGEGWGFMPSDRALVFVDNHDNQRGHGAGGASILTFWDARLYKVAVGFMLAHPYGFTRVMSSYRWARNFVNGQDVNDWIGPPNNNGVIKEVTINADTTCGNDWVCEHRWRQIRNMVWFRNVVDGQPFANWWANGSNQVAFGRGNRGFIVFNNDDWQLSSTLQTGLPGGTYCDVISGDKVGNSCTGIKVYVSSDGTAQFSISNSAEDPFIAIHAESKL.

The N-terminal stretch at 1 to 15 (MKLFLLLSAFGFCWA) is a signal peptide. Glutamine 16 carries the post-translational modification Pyrrolidone carboxylic acid. Disulfide bonds link cysteine 43-cysteine 101, cysteine 85-cysteine 130, and cysteine 156-cysteine 175. Ca(2+) contacts are provided by asparagine 115, arginine 173, and aspartate 182. Residue arginine 210 participates in chloride binding. Aspartate 212 acts as the Nucleophile in catalysis. Histidine 216 provides a ligand contact to Ca(2+). The Proton donor role is filled by glutamate 248. 2 residues coordinate chloride: asparagine 313 and arginine 352. Cysteine 393 and cysteine 399 are oxidised to a cystine. An N-linked (GlcNAc...) asparagine glycan is attached at asparagine 427. Cysteine 465 and cysteine 477 are oxidised to a cystine.

This sequence belongs to the glycosyl hydrolase 13 family. Binds to the sea anemone inhibitor helianthamide and magnificamide. Ca(2+) serves as cofactor. Chloride is required as a cofactor.

The protein localises to the secreted. It is found in the extracellular space. The catalysed reaction is Endohydrolysis of (1-&gt;4)-alpha-D-glucosidic linkages in polysaccharides containing three or more (1-&gt;4)-alpha-linked D-glucose units.. The polypeptide is Pancreatic alpha-amylase (AMY2) (Sus scrofa (Pig)).